The chain runs to 901 residues: Putative receptor protein kinase CRINKLY4 (901 aa).

A signal peptide spans Met-1–Gly-24. Over Leu-25 to Arg-423 the chain is Extracellular. Repeat copies occupy residues Val-33–Pro-68, Phe-72–Gln-107, Leu-125–Glu-160, Val-162–Gly-195, Phe-203–Pro-236, Met-253–Pro-287, and Met-292–Pro-330. The interval Val-33 to Pro-330 is 7 X 36 AA repeats. Asn-151 and Asn-179 each carry an N-linked (GlcNAc...) asparagine glycan. Asn-282 carries N-linked (GlcNAc...) asparagine glycosylation. Intrachain disulfides connect Cys-338/Cys-365, Cys-368/Cys-382, and Cys-372/Cys-390. Residues Cys-357–Gln-391 form a TNFR-Cys repeat. Asn-383 is a glycosylation site (N-linked (GlcNAc...) asparagine). The helical transmembrane segment at Ile-424–Cys-444 threads the bilayer. The Cytoplasmic segment spans residues Leu-445 to Phe-901. In terms of domain architecture, Protein kinase spans Phe-505–Asp-712. ATP is bound by residues Val-511 to Val-519 and Lys-533. The active-site Proton acceptor is Asp-634. The segment at Val-845–Gly-876 is disordered.

The protein belongs to the protein kinase superfamily. Ser/Thr protein kinase family. As to quaternary structure, homodimer.

The protein localises to the cell membrane. It localises to the endosome. It is found in the multivesicular body membrane. It carries out the reaction L-seryl-[protein] + ATP = O-phospho-L-seryl-[protein] + ADP + H(+). The catalysed reaction is L-threonyl-[protein] + ATP = O-phospho-L-threonyl-[protein] + ADP + H(+). Putative receptor protein kinase. Could play a role in a differentiation signal. The CRINKLY4 (CR4) mutation affects leaf epidermis differentiation such that cell size and morphology are altered, and surface functions are compromised, allowing graft-like fusions between organs. The protein is Putative receptor protein kinase CRINKLY4 (CR4) of Zea mays (Maize).